The sequence spans 176 residues: ATP-dependent protease subunit HslV (176 aa).

Threonine 2 is a catalytic residue. Na(+) is bound by residues glycine 157, cysteine 160, and threonine 163.

It belongs to the peptidase T1B family. HslV subfamily. In terms of assembly, a double ring-shaped homohexamer of HslV is capped on each side by a ring-shaped HslU homohexamer. The assembly of the HslU/HslV complex is dependent on binding of ATP.

It localises to the cytoplasm. It catalyses the reaction ATP-dependent cleavage of peptide bonds with broad specificity.. Its activity is regulated as follows. Allosterically activated by HslU binding. Functionally, protease subunit of a proteasome-like degradation complex believed to be a general protein degrading machinery. The sequence is that of ATP-dependent protease subunit HslV from Pectobacterium carotovorum subsp. carotovorum (strain PC1).